The primary structure comprises 127 residues: Small ribosomal subunit protein uS12 (127 aa).

Asp-89 is subject to 3-methylthioaspartic acid.

This sequence belongs to the universal ribosomal protein uS12 family. As to quaternary structure, part of the 30S ribosomal subunit. Contacts proteins S8 and S17. May interact with IF1 in the 30S initiation complex.

Functionally, with S4 and S5 plays an important role in translational accuracy. In terms of biological role, interacts with and stabilizes bases of the 16S rRNA that are involved in tRNA selection in the A site and with the mRNA backbone. Located at the interface of the 30S and 50S subunits, it traverses the body of the 30S subunit contacting proteins on the other side and probably holding the rRNA structure together. The combined cluster of proteins S8, S12 and S17 appears to hold together the shoulder and platform of the 30S subunit. The protein is Small ribosomal subunit protein uS12 of Campylobacter fetus subsp. fetus (strain 82-40).